The following is a 494-amino-acid chain: Integrin beta-like protein 1 (494 aa).

A signal peptide spans 1–23; that stretch reads MRPPGFRNFLLLASSLLFAGLSA. 40 disulfide bridges follow: C40/C71, C51/C69, C63/C74, C76/C89, C91/C112, C96/C110, C104/C115, C117/C126, C132/C159, C143/C157, C151/C162, C164/C178, C180/C202, C185/C200, C194/C205, C207/C216, C220/C247, C231/C245, C239/C250, C252/C269, C271/C296, C276/C294, C288/C299, C301/C310, C316/C343, C327/C341, C335/C346, C348/C361, C363/C384, C368/C382, C376/C387, C389/C398, C404/C431, C415/C429, C423/C434, C436/C448, C450/C471, C455/C469, C463/C474, and C476/C485. 10 consecutive I-EGF domains span residues 40 to 90, 91 to 127, 132 to 179, 180 to 217, 220 to 270, 271 to 311, 316 to 362, 363 to 399, 404 to 449, and 450 to 486; these read CRLS…PLCE, CHEW…DACQ, CDLT…KFCE, CDDR…DKCE, CDIT…DTCE, CDER…KKCE, CTLS…KTCE, CDDR…KLCQ, CNMT…EFCD, and CDDR…NACE. Residues 51-95 form an I repeat; the sequence is CRAPGQPPGAALCHGRGRCDCGVCICHVTEPGMFFGPLCECHEWV. A cysteine-rich tandem repeats region spans residues 51–494; the sequence is CRAPGQPPGA…CEIWLGSEYP (444 aa). Residues 96 to 142 form an II repeat; that stretch reads CETYDGSTCAGHGKCDCGKCKCDQGWYGDACQYPTNCDLTKKKSNQM. An III repeat occupies 143-184; the sequence is CKNSQDIICSNAGTCHCGRCKCDNSDGSGLVYGKFCECDDRE. The IV repeat unit spans residues 185 to 230; sequence CIDDETEEICGGHGKCYCGNCYCKAGWHGDKCEFQCDITPWESKRR. A V repeat occupies 231 to 275; the sequence is CTSPDGKICSNRGTCVCGECTCHDVDPTGDWGDIHGDTCECDERD. One copy of the VI repeat lies at 276–326; that stretch reads CRAVYDRYSDDFCSGHGQCNCGRCDCKAGWYGKKCEHPQSCTLSAEESIRK. A VII repeat occupies 327 to 367; sequence CQGSSDLPCSGRGKCECGKCTCYPPGDRRVYGKTCECDDRR. The VIII repeat unit spans residues 368-414; it reads CEDLDGVVCGGHGTCSCGRCVCERGWFGKLCQHPRKCNMTEEQSKNL. A glycan (N-linked (GlcNAc...) asparagine) is linked at N405. The stretch at 415–454 is one IX repeat; it reads CESADGILCSGKGSCHCGKCICSAEEWYISGEFCDCDDRD. The stretch at 455–494 is one X repeat; the sequence is CDKHDGLICTGNGICSCGNCECWDGWNGNACEIWLGSEYP.

In terms of tissue distribution, widely expressed in many tissues, but readily detectable only in aorta.

The protein localises to the secreted. The protein is Integrin beta-like protein 1 (ITGBL1) of Homo sapiens (Human).